The following is a 183-amino-acid chain: Streptavidin-V1 (183 aa).

The first 24 residues, 1 to 24 (MRKIVVAAIAVSLTTVSITASASA), serve as a signal peptide directing secretion. The region spanning 37 to 159 (AEAGITGTWY…GHDTFTKVKP (123 aa)) is the Avidin-like domain. Residues tyrosine 67 and tyrosine 78 each coordinate biotin. The short motif at 83 to 85 (RYD) is the Cell attachment site; atypical element. Positions 116, 132, and 144 each coordinate biotin.

This sequence belongs to the avidin/streptavidin family. As to quaternary structure, homotetramer.

It localises to the secreted. Functionally, the biological function of streptavidin is not known. Forms a strong non-covalent specific complex with biotin (one molecule of biotin per subunit of streptavidin). The polypeptide is Streptavidin-V1 (Streptomyces violaceus (Streptomyces venezuelae)).